The primary structure comprises 614 residues: Dihydroxy-acid dehydratase 1 (614 aa).

Asp81 provides a ligand contact to Mg(2+). Cys122 is a [2Fe-2S] cluster binding site. Residues Asp123 and Lys124 each coordinate Mg(2+). Lys124 bears the N6-carboxylysine mark. Cys195 is a binding site for [2Fe-2S] cluster. Glu491 serves as a coordination point for Mg(2+). The active-site Proton acceptor is the Ser517.

The protein belongs to the IlvD/Edd family. As to quaternary structure, homodimer. [2Fe-2S] cluster is required as a cofactor. It depends on Mg(2+) as a cofactor.

The catalysed reaction is (2R)-2,3-dihydroxy-3-methylbutanoate = 3-methyl-2-oxobutanoate + H2O. It catalyses the reaction (2R,3R)-2,3-dihydroxy-3-methylpentanoate = (S)-3-methyl-2-oxopentanoate + H2O. It functions in the pathway amino-acid biosynthesis; L-isoleucine biosynthesis; L-isoleucine from 2-oxobutanoate: step 3/4. Its pathway is amino-acid biosynthesis; L-valine biosynthesis; L-valine from pyruvate: step 3/4. Functions in the biosynthesis of branched-chain amino acids. Catalyzes the dehydration of (2R,3R)-2,3-dihydroxy-3-methylpentanoate (2,3-dihydroxy-3-methylvalerate) into 2-oxo-3-methylpentanoate (2-oxo-3-methylvalerate) and of (2R)-2,3-dihydroxy-3-methylbutanoate (2,3-dihydroxyisovalerate) into 2-oxo-3-methylbutanoate (2-oxoisovalerate), the penultimate precursor to L-isoleucine and L-valine, respectively. This chain is Dihydroxy-acid dehydratase 1, found in Mesorhizobium japonicum (strain LMG 29417 / CECT 9101 / MAFF 303099) (Mesorhizobium loti (strain MAFF 303099)).